The chain runs to 367 residues: tRNA-specific 2-thiouridylase MnmA (367 aa).

ATP is bound by residues 13 to 20 (GLSGGVDS) and methionine 39. The interval 99–101 (NPD) is interaction with target base in tRNA. Catalysis depends on cysteine 104, which acts as the Nucleophile. Residues cysteine 104 and cysteine 200 are joined by a disulfide bond. An ATP-binding site is contributed by glycine 128. Positions 150-152 (KDQ) are interaction with tRNA. Cysteine 200 (cysteine persulfide intermediate) is an active-site residue. The interval 307–308 (RY) is interaction with tRNA.

The protein belongs to the MnmA/TRMU family.

It is found in the cytoplasm. It carries out the reaction S-sulfanyl-L-cysteinyl-[protein] + uridine(34) in tRNA + AH2 + ATP = 2-thiouridine(34) in tRNA + L-cysteinyl-[protein] + A + AMP + diphosphate + H(+). In terms of biological role, catalyzes the 2-thiolation of uridine at the wobble position (U34) of tRNA, leading to the formation of s(2)U34. The protein is tRNA-specific 2-thiouridylase MnmA of Neisseria gonorrhoeae (strain ATCC 700825 / FA 1090).